A 352-amino-acid polypeptide reads, in one-letter code: Ion-translocating oxidoreductase complex subunit D (352 aa).

5 helical membrane passes run 20 to 40 (IMLL…RFFG), 42 to 62 (GTLV…ALVL), 78 to 109 (ALLT…VIIA), 123 to 143 (PAMI…TSWL), and 148 to 168 (IAVN…GHTA). Thr-187 bears the FMN phosphoryl threonine mark. 4 helical membrane-spanning segments follow: residues 214-234 (ILAG…GVWL), 242-262 (WHIP…GWLF), 267-287 (LAAP…FFIL), and 301-318 (LMFG…RSFG).

Belongs to the NqrB/RnfD family. In terms of assembly, the complex is composed of six subunits: RsxA, RsxB, RsxC, RsxD, RsxE and RsxG. FMN serves as cofactor.

It localises to the cell inner membrane. Part of a membrane-bound complex that couples electron transfer with translocation of ions across the membrane. Required to maintain the reduced state of SoxR. This Shigella flexneri protein is Ion-translocating oxidoreductase complex subunit D.